We begin with the raw amino-acid sequence, 178 residues long: Nascent polypeptide-associated complex subunit alpha (178 aa).

The NAC-A/B domain maps to Ser20–Ile84. Positions Ala87–Ala104 are enriched in low complexity. Residues Ala87–Ser142 are disordered. The segment covering Glu112–Ser122 has biased composition (polar residues). The span at Thr127–Gly139 shows a compositional bias: acidic residues. The UBA domain occupies Leu140 to Ser178.

Belongs to the NAC-alpha family. As to quaternary structure, part of the nascent polypeptide-associated complex (NAC), consisting of EGD2 and EGD1. NAC associates with ribosomes via EGD1.

The protein resides in the cytoplasm. It is found in the nucleus. Functionally, component of the nascent polypeptide-associated complex (NAC), a dynamic component of the ribosomal exit tunnel, protecting the emerging polypeptides from interaction with other cytoplasmic proteins to ensure appropriate nascent protein targeting. The NAC complex also promotes mitochondrial protein import by enhancing productive ribosome interactions with the outer mitochondrial membrane and blocks the inappropriate interaction of ribosomes translating non-secretory nascent polypeptides with translocation sites in the membrane of the endoplasmic reticulum. EGD2 may also be involved in transcription regulation. This Meyerozyma guilliermondii (strain ATCC 6260 / CBS 566 / DSM 6381 / JCM 1539 / NBRC 10279 / NRRL Y-324) (Yeast) protein is Nascent polypeptide-associated complex subunit alpha (EGD2).